The sequence spans 151 residues: Small ribosomal subunit protein uS15 (151 aa).

The protein belongs to the universal ribosomal protein uS15 family.

In Candida maltosa (Yeast), this protein is Small ribosomal subunit protein uS15 (RPS13).